The sequence spans 168 residues: Gremlin-2 (168 aa).

The N-terminal stretch at 1 to 21 (MFWKLSLTLLLVAVLVKVAET) is a signal peptide. Residue Asn40 is glycosylated (N-linked (GlcNAc...) asparagine). 4 disulfides stabilise this stretch: Cys73–Cys123, Cys87–Cys137, Cys97–Cys155, and Cys101–Cys157. Positions 73-163 (CKTQPLRQTV…HCRCMSVNLS (91 aa)) constitute a CTCK domain. The N-linked (GlcNAc...) asparagine glycan is linked to Asn161.

It belongs to the DAN family. As to quaternary structure, homodimer. Interacts with BMP2, BMP4 and BMP7, but has lower affinity for BMP7 than for BMP2 and BMP4. Binds heparin; this impairs the interaction with BMP2. N-glycosylated. Highly expressed in the ovary, followed by brain, spleen, colon, kidney and uterus. In ovary expressed in granulosa cells of selective early antral follicles.

The protein localises to the secreted. Functionally, cytokine that inhibits the activity of BMP2 and BMP4 in a dose-dependent manner, and thereby modulates signaling by BMP family members. Contributes to the regulation of embryonic morphogenesis via BMP family members. Antagonizes BMP4-induced suppression of progesterone production in granulosa cells. This Mus musculus (Mouse) protein is Gremlin-2 (Grem2).